The following is a 568-amino-acid chain: Pre-mRNA-processing protein 45 (568 aa).

Disordered regions lie at residues 199-232 (EPPK…AQDQ), 281-449 (LNQN…QQKI), and 545-568 (AGKG…RDEE). Basic and acidic residues predominate over residues 286–364 (KTMRDDIGKR…SRDGDSDRSL (79 aa)). The span at 365-379 (SRSLSASDRSYSRSR) shows a compositional bias: low complexity. 3 stretches are compositionally biased toward basic and acidic residues: residues 395–419 (RSPE…LERA), 426–440 (ERLE…DLRL), and 557–568 (RDGPVRFVRDEE).

This sequence belongs to the SNW family. As to quaternary structure, associated with the spliceosome.

Its subcellular location is the nucleus. Its function is as follows. Involved in pre-mRNA splicing. This Yarrowia lipolytica (strain CLIB 122 / E 150) (Yeast) protein is Pre-mRNA-processing protein 45 (PRP45).